We begin with the raw amino-acid sequence, 391 residues long: Nuclear hormone receptor family member nhr-115 (391 aa).

A DNA-binding region (nuclear receptor) is located at residues 5–77 (LFPCQICGQN…IGMDASKFQY (73 aa)). The NR C4-type zinc finger occupies 8 to 28 (CQICGQNSHGTHFGIVSCRAC). The NR C4-type; atypical zinc finger occupies 41 to 65 (ARKGCLTNFKDKGSCFCKPCRLRKC). Positions 130-388 (YLDHGCETPI…FSHPEMFDDS (259 aa)) constitute an NR LBD domain.

The protein belongs to the nuclear hormone receptor family.

The protein localises to the nucleus. Its function is as follows. Orphan nuclear receptor. This is Nuclear hormone receptor family member nhr-115 (nhr-115) from Caenorhabditis elegans.